The following is a 299-amino-acid chain: Lipoyl synthase (299 aa).

The [4Fe-4S] cluster site is built by cysteine 45, cysteine 50, cysteine 56, cysteine 71, cysteine 75, cysteine 78, and serine 284. A Radical SAM core domain is found at 57–273 (YSKGTATFMI…GDVALAKDFL (217 aa)).

The protein belongs to the radical SAM superfamily. Lipoyl synthase family. The cofactor is [4Fe-4S] cluster.

It localises to the cytoplasm. It carries out the reaction [[Fe-S] cluster scaffold protein carrying a second [4Fe-4S](2+) cluster] + N(6)-octanoyl-L-lysyl-[protein] + 2 oxidized [2Fe-2S]-[ferredoxin] + 2 S-adenosyl-L-methionine + 4 H(+) = [[Fe-S] cluster scaffold protein] + N(6)-[(R)-dihydrolipoyl]-L-lysyl-[protein] + 4 Fe(3+) + 2 hydrogen sulfide + 2 5'-deoxyadenosine + 2 L-methionine + 2 reduced [2Fe-2S]-[ferredoxin]. It participates in protein modification; protein lipoylation via endogenous pathway; protein N(6)-(lipoyl)lysine from octanoyl-[acyl-carrier-protein]: step 2/2. Catalyzes the radical-mediated insertion of two sulfur atoms into the C-6 and C-8 positions of the octanoyl moiety bound to the lipoyl domains of lipoate-dependent enzymes, thereby converting the octanoylated domains into lipoylated derivatives. The sequence is that of Lipoyl synthase from Desulfotalea psychrophila (strain LSv54 / DSM 12343).